Here is a 148-residue protein sequence, read N- to C-terminus: MNLYFFTFTGNSRKIAEMVADELAVELREIKSLRLPYIAWLLLSFVPCMAVKIDVQPPTGKEIILCFPKWTFNCPPVTAFLKKFAKGREIRMIICYGGFDERRYAEFYKSFALKCGAKKADYLLVKRRELRENPEKVRDNIKKWLKIS.

This is an uncharacterized protein from Archaeoglobus fulgidus (strain ATCC 49558 / DSM 4304 / JCM 9628 / NBRC 100126 / VC-16).